The sequence spans 475 residues: 23S rRNA (uracil(1939)-C(5))-methyltransferase RlmD (475 aa).

The span at 1–10 shows a compositional bias: basic residues; the sequence is MAMLGKRRPP. Residues 1–33 form a disordered region; that stretch reads MAMLGKRRPPRTANERVRRERGSATRRDDATAD. Positions 13–30 are enriched in basic and acidic residues; that stretch reads ANERVRRERGSATRRDDA. In terms of domain architecture, TRAM spans 26–85; it reads RRDDATADGLSIERLAHDGRGVARDPHGKTVFVDQALPGERVRVAVHRQRKRFDEAHVVE. [4Fe-4S] cluster is bound by residues Cys98, Cys104, Cys107, and Cys183. Gln294, Phe323, Asn328, Glu344, Asp371, and Asp388 together coordinate S-adenosyl-L-methionine. The Nucleophile role is filled by Cys414. A disordered region spans residues 455-475; that stretch reads TRDTPRGRSTSVEREDHGQGP. Basic and acidic residues predominate over residues 457 to 475; sequence DTPRGRSTSVEREDHGQGP.

It belongs to the class I-like SAM-binding methyltransferase superfamily. RNA M5U methyltransferase family. RlmD subfamily.

It catalyses the reaction uridine(1939) in 23S rRNA + S-adenosyl-L-methionine = 5-methyluridine(1939) in 23S rRNA + S-adenosyl-L-homocysteine + H(+). In terms of biological role, catalyzes the formation of 5-methyl-uridine at position 1939 (m5U1939) in 23S rRNA. This is 23S rRNA (uracil(1939)-C(5))-methyltransferase RlmD from Chromohalobacter salexigens (strain ATCC BAA-138 / DSM 3043 / CIP 106854 / NCIMB 13768 / 1H11).